The following is an 85-amino-acid chain: Small integral membrane protein 35 (85 aa).

Residues 7 to 27 (ISTLGMILGVGLSLLLVSILG) traverse the membrane as a helical segment.

The protein localises to the membrane. The protein is Small integral membrane protein 35 of Mus musculus (Mouse).